A 536-amino-acid polypeptide reads, in one-letter code: Bifunctional purine biosynthesis protein PurH (536 aa).

Residues 8-158 (IPAPDEVRIK…KNHAYVTVVT (151 aa)) form the MGS-like domain.

This sequence belongs to the PurH family.

The catalysed reaction is (6R)-10-formyltetrahydrofolate + 5-amino-1-(5-phospho-beta-D-ribosyl)imidazole-4-carboxamide = 5-formamido-1-(5-phospho-D-ribosyl)imidazole-4-carboxamide + (6S)-5,6,7,8-tetrahydrofolate. The enzyme catalyses IMP + H2O = 5-formamido-1-(5-phospho-D-ribosyl)imidazole-4-carboxamide. It functions in the pathway purine metabolism; IMP biosynthesis via de novo pathway; 5-formamido-1-(5-phospho-D-ribosyl)imidazole-4-carboxamide from 5-amino-1-(5-phospho-D-ribosyl)imidazole-4-carboxamide (10-formyl THF route): step 1/1. Its pathway is purine metabolism; IMP biosynthesis via de novo pathway; IMP from 5-formamido-1-(5-phospho-D-ribosyl)imidazole-4-carboxamide: step 1/1. In Sinorhizobium medicae (strain WSM419) (Ensifer medicae), this protein is Bifunctional purine biosynthesis protein PurH.